The primary structure comprises 642 residues: Chaperone protein DnaK (642 aa).

Thr-199 carries the phosphothreonine; by autocatalysis modification. A compositionally biased stretch (basic and acidic residues) spans 570–585 (EELEQASKDGDKEAID). The interval 570-642 (EELEQASKDG…FEEVKDDDKK (73 aa)) is disordered. The segment covering 600–620 (EAAQQQQAQQGAEGAAGGEQQ) has biased composition (low complexity). Residues 627–642 (DVVDAEFEEVKDDDKK) show a composition bias toward acidic residues.

The protein belongs to the heat shock protein 70 family.

Functionally, acts as a chaperone. This Idiomarina loihiensis (strain ATCC BAA-735 / DSM 15497 / L2-TR) protein is Chaperone protein DnaK.